We begin with the raw amino-acid sequence, 348 residues long: MIETDRLIAASGRDREEVQDRAIRPLRLDEYIGQPVVREQMALFIQAARGRNESLDHTLIFGPPGLGKTTLANIIAQEMGVSVKSTSGPILERPGDLAAMLTNLEPHDVLFIDEIHRLSPVVEEVLYPAMEDFQLDIMIGEGPAARSIKLDLPPFTLVGATTRAGMLTNPLRDRFGIVQRLEFYSNKDLATIVSRSAGILGLPMDDKGAFEIARRARGTPRIANRLLRRVRDFAEVRGKGEITKAVADMALNLLDVDERGFDHSDRRLLLTMIEKFDGGPVGLDNIAAAIGEERHTIEDVLEPYLIQQGYIMRTPRGRVVTRHAYLHFGLNIPGRFCEGGEYAAQDDE.

The interval 4–184 (TDRLIAASGR…FGIVQRLEFY (181 aa)) is large ATPase domain (RuvB-L). Residues Ile-23, Arg-24, Gly-65, Lys-68, Thr-69, Thr-70, 131–133 (EDF), Arg-174, Tyr-184, and Arg-221 contribute to the ATP site. A Mg(2+)-binding site is contributed by Thr-69. The tract at residues 185–255 (SNKDLATIVS…VADMALNLLD (71 aa)) is small ATPAse domain (RuvB-S). Positions 258–348 (ERGFDHSDRR…GGEYAAQDDE (91 aa)) are head domain (RuvB-H). DNA is bound by residues Arg-294, Arg-313, and Arg-318.

This sequence belongs to the RuvB family. Homohexamer. Forms an RuvA(8)-RuvB(12)-Holliday junction (HJ) complex. HJ DNA is sandwiched between 2 RuvA tetramers; dsDNA enters through RuvA and exits via RuvB. An RuvB hexamer assembles on each DNA strand where it exits the tetramer. Each RuvB hexamer is contacted by two RuvA subunits (via domain III) on 2 adjacent RuvB subunits; this complex drives branch migration. In the full resolvosome a probable DNA-RuvA(4)-RuvB(12)-RuvC(2) complex forms which resolves the HJ.

It localises to the cytoplasm. It catalyses the reaction ATP + H2O = ADP + phosphate + H(+). Its function is as follows. The RuvA-RuvB-RuvC complex processes Holliday junction (HJ) DNA during genetic recombination and DNA repair, while the RuvA-RuvB complex plays an important role in the rescue of blocked DNA replication forks via replication fork reversal (RFR). RuvA specifically binds to HJ cruciform DNA, conferring on it an open structure. The RuvB hexamer acts as an ATP-dependent pump, pulling dsDNA into and through the RuvAB complex. RuvB forms 2 homohexamers on either side of HJ DNA bound by 1 or 2 RuvA tetramers; 4 subunits per hexamer contact DNA at a time. Coordinated motions by a converter formed by DNA-disengaged RuvB subunits stimulates ATP hydrolysis and nucleotide exchange. Immobilization of the converter enables RuvB to convert the ATP-contained energy into a lever motion, pulling 2 nucleotides of DNA out of the RuvA tetramer per ATP hydrolyzed, thus driving DNA branch migration. The RuvB motors rotate together with the DNA substrate, which together with the progressing nucleotide cycle form the mechanistic basis for DNA recombination by continuous HJ branch migration. Branch migration allows RuvC to scan DNA until it finds its consensus sequence, where it cleaves and resolves cruciform DNA. The sequence is that of Holliday junction branch migration complex subunit RuvB from Pseudomonas entomophila (strain L48).